The sequence spans 26 residues: Hemocyanin subunit 3 (26 aa).

It belongs to the tyrosinase family. Hemocyanin subfamily. As to expression, hemolymph.

It is found in the secreted. The protein localises to the extracellular space. Functionally, hemocyanins are copper-containing oxygen carriers occurring freely dissolved in the hemolymph of many mollusks and arthropods. In Homarus americanus (American lobster), this protein is Hemocyanin subunit 3.